The primary structure comprises 215 residues: Adenylate kinase (215 aa).

An ATP-binding site is contributed by 10–15; that stretch reads GAGKGT. The tract at residues 30–60 is NMP; that stretch reads STGDMLRAAIIKAGTEMGKQAKSVIDAGQLV. AMP is bound by residues Thr31, Arg36, 58–60, 86–89, and Gln93; these read QLV and GFPR. Residues 123–160 form an LID region; sequence GRRAHLPSGRTYHVTFNPSKVEGQDDVTGEPLVIREDD. Residues Arg124 and 133–134 contribute to the ATP site; that span reads TY. Residues Arg157 and Arg168 each coordinate AMP. Lys201 provides a ligand contact to ATP.

Belongs to the adenylate kinase family. In terms of assembly, monomer.

The protein resides in the cytoplasm. It catalyses the reaction AMP + ATP = 2 ADP. It participates in purine metabolism; AMP biosynthesis via salvage pathway; AMP from ADP: step 1/1. Its function is as follows. Catalyzes the reversible transfer of the terminal phosphate group between ATP and AMP. Plays an important role in cellular energy homeostasis and in adenine nucleotide metabolism. This Aliivibrio salmonicida (strain LFI1238) (Vibrio salmonicida (strain LFI1238)) protein is Adenylate kinase.